The following is a 144-amino-acid chain: Maximins 3/H11 type 2 (144 aa).

The N-terminal stretch at 1–18 is a signal peptide; it reads MHFKYIVAVSFLIASAYA. 2 consecutive propeptides follow at residues 19 to 43 and 73 to 122; these read RSVQ…REIR and RTAE…KKEK. At Ile143 the chain carries Isoleucine amide.

It belongs to the bombinin family. As to expression, expressed by the skin glands.

Its subcellular location is the secreted. Maximin-3 shows antibacterial activity against both Gram-positive and Gram-negative bacteria. It also shows antimicrobial activity against the fungus C.albicans, but not against A.flavus nor P.uticale. It has little hemolytic activity. It possess a significant cytotoxicity against tumor cell lines. It possess a significant anti-HIV activity. It shows high spermicidal activity. In terms of biological role, maximin-H11 shows antimicrobial activity against bacteria and against the fungus C.albicans. Shows strong hemolytic activity. The sequence is that of Maximins 3/H11 type 2 from Bombina maxima (Giant fire-bellied toad).